The following is a 220-amino-acid chain: Deoxyribose-phosphate aldolase (220 aa).

Residue aspartate 89 is the Proton donor/acceptor of the active site. Residue lysine 151 is the Schiff-base intermediate with acetaldehyde of the active site. Lysine 180 functions as the Proton donor/acceptor in the catalytic mechanism.

The protein belongs to the DeoC/FbaB aldolase family. DeoC type 1 subfamily.

The protein resides in the cytoplasm. It catalyses the reaction 2-deoxy-D-ribose 5-phosphate = D-glyceraldehyde 3-phosphate + acetaldehyde. Its pathway is carbohydrate degradation; 2-deoxy-D-ribose 1-phosphate degradation; D-glyceraldehyde 3-phosphate and acetaldehyde from 2-deoxy-alpha-D-ribose 1-phosphate: step 2/2. Functionally, catalyzes a reversible aldol reaction between acetaldehyde and D-glyceraldehyde 3-phosphate to generate 2-deoxy-D-ribose 5-phosphate. The polypeptide is Deoxyribose-phosphate aldolase (Streptococcus pneumoniae (strain 70585)).